The primary structure comprises 140 residues: D-ribose pyranase (140 aa).

H20 acts as the Proton donor in catalysis. Substrate is bound by residues D28, H99, and 121–123 (YSS).

Belongs to the RbsD / FucU family. RbsD subfamily. In terms of assembly, homodecamer.

The protein localises to the cytoplasm. The catalysed reaction is beta-D-ribopyranose = beta-D-ribofuranose. Its pathway is carbohydrate metabolism; D-ribose degradation; D-ribose 5-phosphate from beta-D-ribopyranose: step 1/2. In terms of biological role, catalyzes the interconversion of beta-pyran and beta-furan forms of D-ribose. This chain is D-ribose pyranase, found in Pseudothermotoga lettingae (strain ATCC BAA-301 / DSM 14385 / NBRC 107922 / TMO) (Thermotoga lettingae).